We begin with the raw amino-acid sequence, 647 residues long: RalA-binding protein 1 (647 aa).

Disordered regions lie at residues 1–151 (MTEC…EKKC) and 163–186 (WKEK…APSL). The residue at position 2 (T2) is an N-acetylthreonine. The segment covering 24 to 33 (LTRTPSSEEI) has biased composition (polar residues). Residues S29, S30, and S34 each carry the phosphoserine modification. Position 44 is a phosphothreonine (T44). Phosphoserine is present on residues S48 and S62. Positions 52 to 68 (DILHEPPDIVSDDEKDH) are enriched in basic and acidic residues. 69-74 (GKKKGK) contributes to the ATP binding site. The segment covering 69 to 79 (GKKKGKFKKKE) has biased composition (basic residues). Phosphoserine occurs at positions 92 and 93. A compositionally biased stretch (basic residues) spans 102–118 (KMKRSKGIHVFKKPSFS). A nuclear localization signal region spans residues 102 to 119 (KMKRSKGIHVFKKPSFSK). Residues 119–151 (KKKEKDFKIKEKPKEEKHKEEKHKEEKHKEKKC) are compositionally biased toward basic and acidic residues. The mediates association with membranes and could form transmembrane domains stretch occupies residues 154 to 219 (FTAADVVKQW…PAVFRECVDY (66 aa)). The Rho-GAP domain occupies 192-380 (APFADAVERT…VLLKQVTRPL (189 aa)). A mediates interaction with RALA and RALB region spans residues 403-499 (RRQEFLLNCL…LTEQEELLAM (97 aa)). Residue 418 to 425 (GGIKDFSK) participates in ATP binding. 2 positions are modified to phosphoserine: S461 and S463. The interval 500–647 (EQFLRRQIAS…PSKDRKETPI (148 aa)) is mediates interaction with REPS1 and REPS2. Disordered stretches follow at residues 525–550 (QSRQ…DEEE) and 601–647 (EQQL…ETPI). Over residues 535-550 (EEYSSDSESESEDEEE) the composition is skewed to acidic residues. Residues 628-647 (RAAKEQAKPSPSKDRKETPI) are compositionally biased toward basic and acidic residues. Phosphoserine is present on S637.

Interacts with the GTP-bound form of RALA (via effector domain); during mitosis, recruits RALBP1 to the mitochondrion where it promotes DNM1L phosphorylation and mitochondrial fission. Interacts with DNM1L; mediates its mitotic kinase cyclin B-CDK1-mediated phosphorylation during mitosis to promote mitochondrial fission. Interacts with the mitotic kinase cyclin B-CDK1 during mitosis. Interacts with the GTP-bound form of RALB (via effector domain). Interacts with REPS1; the interaction is direct and does not affect RALA-binding nor GTPase activator activity of RALBP1. Interacts with REPS2; the interaction is direct and does not affect RALA-binding nor GTPase activator activity of RALBP1. Interacts with EPN1, NUMB and TFAP2A during interphase and mitosis. Interacts with AP2M1; as part of the AP2 complex. Interacts with CDC42. Interacts with RAC1. Post-translationally, tyrosine-phosphorylated upon stimulation of cells with EGF. In terms of processing, may undergo proteolytic cleavage to give peptides which reassemble to form a transporter complex. In terms of tissue distribution, ubiquitously expressed.

It is found in the cell membrane. The protein resides in the cytoplasm. It localises to the cytosol. Its subcellular location is the cytoskeleton. The protein localises to the spindle pole. It is found in the nucleus. The protein resides in the mitochondrion. It carries out the reaction an S-substituted glutathione(in) + ATP + H2O = an S-substituted glutathione(out) + ADP + phosphate + H(+). The catalysed reaction is ATP + H2O + xenobioticSide 1 = ADP + phosphate + xenobioticSide 2.. It catalyses the reaction leukotriene C4(in) + ATP + H2O = leukotriene C4(out) + ADP + phosphate + H(+). Multifunctional protein that functions as a downstream effector of RALA and RALB. As a GTPase-activating protein/GAP can inactivate CDC42 and RAC1 by stimulating their GTPase activity. As part of the Ral signaling pathway, may also regulate ligand-dependent EGF and insulin receptors-mediated endocytosis. During mitosis, may act as a scaffold protein in the phosphorylation of EPSIN/EPN1 by the mitotic kinase cyclin B-CDK1, preventing endocytosis during that phase of the cell cycle. During mitosis, also controls mitochondrial fission as an effector of RALA. Recruited to mitochondrion by RALA, acts as a scaffold to foster the mitotic kinase cyclin B-CDK1-mediated phosphorylation and activation of DNM1L. Functionally, could also function as a primary ATP-dependent active transporter for glutathione conjugates of electrophiles. May also actively catalyze the efflux of a wide range of substrates including xenobiotics like doxorubicin (DOX) contributing to cell multidrug resistance. This Rattus norvegicus (Rat) protein is RalA-binding protein 1.